Here is a 51-residue protein sequence, read N- to C-terminus: Photosystem I reaction center subunit IX (51 aa).

A helical membrane pass occupies residues 17 to 37 (FFSTAPVIALVFFTLTAGFLV).

This sequence belongs to the PsaJ family.

It localises to the cellular thylakoid membrane. Its function is as follows. May help in the organization of the PsaE and PsaF subunits. The sequence is that of Photosystem I reaction center subunit IX from Acaryochloris marina (strain MBIC 11017).